The sequence spans 432 residues: Peptidase B (432 aa).

2 residues coordinate Mn(2+): Lys-196 and Asp-201. The active site involves Lys-208. 3 residues coordinate Mn(2+): Asp-219, Asp-278, and Glu-280. Residue Arg-282 is part of the active site.

The protein belongs to the peptidase M17 family. Homohexamer. Mn(2+) is required as a cofactor.

The protein localises to the cytoplasm. It catalyses the reaction Release of an N-terminal amino acid, Xaa, from a peptide or arylamide. Xaa is preferably Glu or Asp but may be other amino acids, including Leu, Met, His, Cys and Gln.. In terms of biological role, probably plays an important role in intracellular peptide degradation. The chain is Peptidase B from Yersinia pseudotuberculosis serotype IB (strain PB1/+).